Consider the following 471-residue polypeptide: Argininosuccinate lyase (471 aa).

It belongs to the lyase 1 family. Argininosuccinate lyase subfamily.

The protein resides in the cytoplasm. It carries out the reaction 2-(N(omega)-L-arginino)succinate = fumarate + L-arginine. Its pathway is amino-acid biosynthesis; L-arginine biosynthesis; L-arginine from L-ornithine and carbamoyl phosphate: step 3/3. This Cereibacter sphaeroides (strain ATCC 17023 / DSM 158 / JCM 6121 / CCUG 31486 / LMG 2827 / NBRC 12203 / NCIMB 8253 / ATH 2.4.1.) (Rhodobacter sphaeroides) protein is Argininosuccinate lyase.